The following is a 496-amino-acid chain: MKVLQFNQDATCCVVAASSHQISIFNCDPFGKCFEIDTKNSKKKTSNNNGSASNSESRNNEESILITNGSRDRTDAEEEEDNEDNALVTGNILKEGEFVIEMLFSTSLIAIADRGQGLNKGKKLKIVNTKRKCTICEIVFPHEIVDVVMNRKRMCVLLESDQIFIYDISCMKPLETIDLWEDHYKRSQANSFSNASNTGTLEGDSANLNRVATNLLANATQKSVNGSNPSVRTRRNSLRSKIRPRMVLSNDDRSILCFTAYSSPKKNKPNSEALYDVVIYDTLNVTPVNYLNSVHKGNVACLAVSHDGKLLATASDKGTIIRVFHTGVDSDYMSSRSLFKEFRRGTRLCNLYQLAFDKSMTMIGCVGDTDTIHLFKLDDASNSLPGDNSSNGHWNEEEYILASNSNPSMGTPKEIPLSKPRIANYFSKKIKSSIPNQNLSRNFAYITVNESNRSCLGFPDEFPNQVYIASDDGTFSIYSIPSKPGECVLTKNNKFT.

The interval S41–A86 is disordered. Low complexity predominate over residues S46–S57. Residues D75–D84 are compositionally biased toward acidic residues. T213 is subject to Phosphothreonine. The residue at position 237 (S237) is a Phosphoserine. 3 WD repeats span residues V294 to S334, T346 to P385, and V448 to V488. The short motif at F342–T346 is the L/FRRG motif element.

Belongs to the WD repeat PROPPIN family.

The protein localises to the cytoplasm. Its subcellular location is the vacuole. In terms of biological role, required for cytoplasm to vacuole transport (Cvt) vesicles formation and mitophagy. Involved in binding of phosphatidylethanolamine to ATG8 and in recruitment of ATG8 and ATG5 to the pre-autophagosomal structure. Protects ATG8 from ARG4-mediated cleavage. Essential for maturation of proaminopeptidase I. The sequence is that of Autophagy-related protein 21 (ATG21) from Saccharomyces cerevisiae (strain ATCC 204508 / S288c) (Baker's yeast).